Consider the following 89-residue polypeptide: Small ribosomal subunit protein uS19 (89 aa).

This sequence belongs to the universal ribosomal protein uS19 family.

In terms of biological role, protein S19 forms a complex with S13 that binds strongly to the 16S ribosomal RNA. This is Small ribosomal subunit protein uS19 from Stenotrophomonas maltophilia (strain K279a).